A 73-amino-acid polypeptide reads, in one-letter code: Large ribosomal subunit protein bL28 (73 aa).

The protein belongs to the bacterial ribosomal protein bL28 family.

This chain is Large ribosomal subunit protein bL28, found in Fervidobacterium nodosum (strain ATCC 35602 / DSM 5306 / Rt17-B1).